The chain runs to 185 residues: Elongation factor P (185 aa).

Belongs to the elongation factor P family.

The protein resides in the cytoplasm. It functions in the pathway protein biosynthesis; polypeptide chain elongation. Involved in peptide bond synthesis. Stimulates efficient translation and peptide-bond synthesis on native or reconstituted 70S ribosomes in vitro. Probably functions indirectly by altering the affinity of the ribosome for aminoacyl-tRNA, thus increasing their reactivity as acceptors for peptidyl transferase. The chain is Elongation factor P from Staphylococcus epidermidis (strain ATCC 35984 / DSM 28319 / BCRC 17069 / CCUG 31568 / BM 3577 / RP62A).